A 188-amino-acid chain; its full sequence is Ribosome-recycling factor (188 aa).

The protein belongs to the RRF family.

It is found in the cytoplasm. Its function is as follows. Responsible for the release of ribosomes from messenger RNA at the termination of protein biosynthesis. May increase the efficiency of translation by recycling ribosomes from one round of translation to another. The polypeptide is Ribosome-recycling factor (Anaeromyxobacter dehalogenans (strain 2CP-1 / ATCC BAA-258)).